A 903-amino-acid polypeptide reads, in one-letter code: Protein translocase subunit SecA (903 aa).

ATP contacts are provided by residues glutamine 89, 107–111 (GEGKT), and aspartate 502. Positions 886, 888, 897, and 898 each coordinate Zn(2+).

Belongs to the SecA family. Monomer and homodimer. Part of the essential Sec protein translocation apparatus which comprises SecA, SecYEG and auxiliary proteins SecDF-YajC and YidC. Zn(2+) is required as a cofactor.

It is found in the cell inner membrane. The protein resides in the cytoplasm. The catalysed reaction is ATP + H2O + cellular proteinSide 1 = ADP + phosphate + cellular proteinSide 2.. Its function is as follows. Part of the Sec protein translocase complex. Interacts with the SecYEG preprotein conducting channel. Has a central role in coupling the hydrolysis of ATP to the transfer of proteins into and across the cell membrane, serving both as a receptor for the preprotein-SecB complex and as an ATP-driven molecular motor driving the stepwise translocation of polypeptide chains across the membrane. This chain is Protein translocase subunit SecA, found in Rhizobium meliloti (strain 1021) (Ensifer meliloti).